We begin with the raw amino-acid sequence, 729 residues long: Disintegrin and metalloproteinase domain-containing protein 21 (729 aa).

Residues 1–39 (MECFIMLGADARTLMRVTLLLLWLKALPSLIDLSQTGST) form the signal peptide. A propeptide spanning residues 40–209 (QYLSSPEVVI…MKQNYGKLWP (170 aa)) is cleaved from the precursor. A glycan (N-linked (GlcNAc...) asparagine) is linked at Asn-169. A Cysteine switch motif is present at residues 176–183 (MLCSLTEK). Residue Cys-178 participates in Zn(2+) binding. At 210-685 (HMWFLELAVV…DSGPTSQKRR (476 aa)) the chain is on the extracellular side. Positions 212–402 (WFLELAVVVD…NQGTCLYNHP (191 aa)) constitute a Peptidase M12B domain. The N-linked (GlcNAc...) asparagine glycan is linked to Asn-231. Intrachain disulfides connect Cys-320–Cys-397, Cys-360–Cys-382, and Cys-362–Cys-367. His-345 provides a ligand contact to Zn(2+). Glu-346 is an active-site residue. Positions 349 and 355 each coordinate Zn(2+). Residues Asn-381, Asn-441, and Asn-482 are each glycosylated (N-linked (GlcNAc...) asparagine). The Disintegrin domain maps to 410–496 (VKRCGNGMVE…QCPEDGYVQD (87 aa)). Cystine bridges form between Cys-468-Cys-488, Cys-638-Cys-649, Cys-643-Cys-655, and Cys-657-Cys-666. The region spanning 638–667 (CLPETCNRKGVCNNKHHCHCDYGWSPPFCL) is the EGF-like domain. A helical membrane pass occupies residues 686 to 706 (VIITVLSITVPVLSILICLLI). At 707 to 729 (AGLYRIYCKIPSGPKETKASSPG) the chain is on the cytoplasmic side.

Zn(2+) serves as cofactor. Has no obvious cleavage site for furin endopeptidase, suggesting that the proteolytic processing is regulated. Highly expressed in Leydig cells. Expressed also in cauda epididymidis, vas deferens, convoluted tubules, kidney and the parietal cells of stomach. Not detected on developing spermatocytes or mature sperm.

Its subcellular location is the membrane. Functionally, may be involved in sperm maturation and/or fertilization. May also be involved in epithelia functions associated with establishing and maintaining gradients of ions or nutrients. The polypeptide is Disintegrin and metalloproteinase domain-containing protein 21 (Adam21) (Mus musculus (Mouse)).